The primary structure comprises 370 residues: UPF0284 protein PCC7424_2681 (370 aa).

The protein belongs to the UPF0284 family.

The polypeptide is UPF0284 protein PCC7424_2681 (Gloeothece citriformis (strain PCC 7424) (Cyanothece sp. (strain PCC 7424))).